A 295-amino-acid chain; its full sequence is Pyridoxal 5'-phosphate synthase subunit PdxS (295 aa).

D-ribose 5-phosphate is bound at residue Asp25. Lys82 acts as the Schiff-base intermediate with D-ribose 5-phosphate in catalysis. Gly154 lines the D-ribose 5-phosphate pocket. Arg166 is a D-glyceraldehyde 3-phosphate binding site. D-ribose 5-phosphate is bound by residues Gly215 and 236 to 237; that span reads GS.

This sequence belongs to the PdxS/SNZ family. In terms of assembly, in the presence of PdxT, forms a dodecamer of heterodimers.

It carries out the reaction aldehydo-D-ribose 5-phosphate + D-glyceraldehyde 3-phosphate + L-glutamine = pyridoxal 5'-phosphate + L-glutamate + phosphate + 3 H2O + H(+). It participates in cofactor biosynthesis; pyridoxal 5'-phosphate biosynthesis. In terms of biological role, catalyzes the formation of pyridoxal 5'-phosphate from ribose 5-phosphate (RBP), glyceraldehyde 3-phosphate (G3P) and ammonia. The ammonia is provided by the PdxT subunit. Can also use ribulose 5-phosphate and dihydroxyacetone phosphate as substrates, resulting from enzyme-catalyzed isomerization of RBP and G3P, respectively. In Bacillus anthracis (strain A0248), this protein is Pyridoxal 5'-phosphate synthase subunit PdxS.